The following is a 238-amino-acid chain: Purine nucleoside phosphorylase DeoD-type (238 aa).

A purine D-ribonucleoside is bound at residue His4. Phosphate contacts are provided by residues Gly20, Arg24, Arg43, and 87 to 90 (RVGS). A purine D-ribonucleoside is bound by residues 179–181 (EME) and 203–204 (SD). The active-site Proton donor is the Asp204.

It belongs to the PNP/UDP phosphorylase family. In terms of assembly, homohexamer; trimer of homodimers.

The catalysed reaction is a purine D-ribonucleoside + phosphate = a purine nucleobase + alpha-D-ribose 1-phosphate. The enzyme catalyses a purine 2'-deoxy-D-ribonucleoside + phosphate = a purine nucleobase + 2-deoxy-alpha-D-ribose 1-phosphate. Catalyzes the reversible phosphorolytic breakdown of the N-glycosidic bond in the beta-(deoxy)ribonucleoside molecules, with the formation of the corresponding free purine bases and pentose-1-phosphate. The chain is Purine nucleoside phosphorylase DeoD-type from Haemophilus influenzae (strain PittGG).